Reading from the N-terminus, the 456-residue chain is tRNA (guanine(37)-N(1))-methyltransferase (456 aa).

Residues histidine 246, 284-285, 310-311, and asparagine 336 each bind S-adenosyl-L-methionine; these read DL and DG.

Belongs to the class I-like SAM-binding methyltransferase superfamily. TRM5/TYW2 family. As to quaternary structure, monomer.

It localises to the mitochondrion matrix. Its subcellular location is the nucleus. It is found in the cytoplasm. It carries out the reaction guanosine(37) in tRNA + S-adenosyl-L-methionine = N(1)-methylguanosine(37) in tRNA + S-adenosyl-L-homocysteine + H(+). Its function is as follows. Specifically methylates the N1 position of guanosine-37 in various cytoplasmic and mitochondrial tRNAs. Methylation is not dependent on the nature of the nucleoside 5' of the target nucleoside. This is the first step in the biosynthesis of wybutosine (yW), a modified base adjacent to the anticodon of tRNAs and required for accurate decoding. The chain is tRNA (guanine(37)-N(1))-methyltransferase from Ciona intestinalis (Transparent sea squirt).